Consider the following 197-residue polypeptide: Histidine biosynthesis bifunctional protein HisIE (197 aa).

The phosphoribosyl-AMP cyclohydrolase stretch occupies residues 1-108; the sequence is MMTLYPVVVQ…RFEETGSPTF (108 aa). A phosphoribosyl-ATP pyrophosphohydrolase region spans residues 109–197; that stretch reads WLELYRLVRK…VMRELEKRRK (89 aa).

In the N-terminal section; belongs to the PRA-CH family. It in the C-terminal section; belongs to the PRA-PH family.

It localises to the cytoplasm. The catalysed reaction is 1-(5-phospho-beta-D-ribosyl)-ATP + H2O = 1-(5-phospho-beta-D-ribosyl)-5'-AMP + diphosphate + H(+). It catalyses the reaction 1-(5-phospho-beta-D-ribosyl)-5'-AMP + H2O = 1-(5-phospho-beta-D-ribosyl)-5-[(5-phospho-beta-D-ribosylamino)methylideneamino]imidazole-4-carboxamide. It participates in amino-acid biosynthesis; L-histidine biosynthesis; L-histidine from 5-phospho-alpha-D-ribose 1-diphosphate: step 2/9. It functions in the pathway amino-acid biosynthesis; L-histidine biosynthesis; L-histidine from 5-phospho-alpha-D-ribose 1-diphosphate: step 3/9. This Thermotoga maritima (strain ATCC 43589 / DSM 3109 / JCM 10099 / NBRC 100826 / MSB8) protein is Histidine biosynthesis bifunctional protein HisIE (hisI).